Consider the following 174-residue polypeptide: Gamma-crystallin C (174 aa).

Beta/gamma crystallin 'Greek key' domains follow at residues 2–40 (GKIT…RVES) and 41–83 (GCWM…CLIP). An S-methylcysteine modification is found at Cys23. A connecting peptide region spans residues 84 to 87 (QTVS). Beta/gamma crystallin 'Greek key' domains are found at residues 88–128 (HRLR…HVLE) and 129–171 (GCWV…RRVV).

It belongs to the beta/gamma-crystallin family. Monomer.

Crystallins are the dominant structural components of the vertebrate eye lens. The sequence is that of Gamma-crystallin C (CRYGC) from Homo sapiens (Human).